The following is a 798-amino-acid chain: Type 2 DNA topoisomerase 6 subunit B (798 aa).

Residues N60, D91, 112 to 113 (SR), and 122 to 129 (GQQGIGIS) each bind ATP. A compositionally biased stretch (basic and acidic residues) spans 221 to 233 (EPEDSFKSERATE). The tract at residues 221–245 (EPEDSFKSERATEELPPETEEIRPH) is disordered. K629 provides a ligand contact to ATP.

Belongs to the TOP6B family. Homodimer. Heterotetramer of two Top6A and two Top6B chains.

The enzyme catalyses ATP-dependent breakage, passage and rejoining of double-stranded DNA.. In terms of biological role, relaxes both positive and negative superturns and exhibits a strong decatenase activity. This is Type 2 DNA topoisomerase 6 subunit B from Natronomonas pharaonis (strain ATCC 35678 / DSM 2160 / CIP 103997 / JCM 8858 / NBRC 14720 / NCIMB 2260 / Gabara) (Halobacterium pharaonis).